The sequence spans 576 residues: MNIFLDIFSFILFFGILTIISPILGKYMADIYEGRVHPSLKPIRYVEKTIYKILGIDESKEMNWKEYLYALLSFNFLGFLVLFLTLLFQKYLPLNQYHIPNMSWDLAFNTAVSFVTNTNWQAYAGETQATYFSQITGLALQNFLSAASGIVVALVLIRAFARKNTIYLGNFYVDFTRTILYVLLPVAFFSALFLVSQGVIQNFSHYKTIELLEPYKDSKNIITTQTLPMGPVASQEAIKLLGTNGGGFFNANSAHPFENPTPLSNVFEAFLIILIPASLVFTFGYMIKDKRQGWFLYSVMLFVLMLFMGIQYYFEWFGNPIVKKLGIEGPYLIGKELRFGIGGTVLFSSITTATSCGAVNSMLDSFTPLGGLVPMSLISLGEIIFGGVGSGLYGMIAMVIIAVFVAGLMIGRTPEYLNKKIESREMWSSVVITLVSGITALLLTTLALYTKWGLSSMSNPGPHGLSEVLYAYISTSNNSGSAFAGLNANTVFYNITTGLAMLIGRFIPIIAVFYMASSLSLKKHVPPSPGTLPTHTLVFGVWLVFIIIVVGALTFLPAFSLGPILEHMLMLEGVTL.

The next 12 membrane-spanning stretches (helical) occupy residues 3–23, 68–88, 137–157, 179–199, 267–287, 294–314, 339–359, 369–389, 391–411, 430–450, 495–515, and 537–557; these read IFLD…ISPI, LYAL…TLLF, GLAL…LVLI, ILYV…SQGV, FEAF…GYMI, WFLY…QYYF, FGIG…CGAV, LGGL…GGVG, GLYG…LMIG, VVIT…ALYT, ITTG…VFYM, and LVFG…TFLP.

This sequence belongs to the KdpA family. In terms of assembly, the system is composed of three essential subunits: KdpA, KdpB and KdpC.

The protein localises to the cell inner membrane. Its function is as follows. Part of the high-affinity ATP-driven potassium transport (or Kdp) system, which catalyzes the hydrolysis of ATP coupled with the electrogenic transport of potassium into the cytoplasm. This subunit binds the periplasmic potassium ions and delivers the ions to the membrane domain of KdpB through an intramembrane tunnel. This is Potassium-transporting ATPase potassium-binding subunit from Hydrogenobaculum sp. (strain Y04AAS1).